A 55-amino-acid polypeptide reads, in one-letter code: Small ribosomal subunit protein uS14 (55 aa).

Zn(2+)-binding residues include cysteine 20, cysteine 23, cysteine 38, and cysteine 41.

This sequence belongs to the universal ribosomal protein uS14 family. It depends on Zn(2+) as a cofactor.

The protein is Small ribosomal subunit protein uS14 (rps29) of Dictyostelium discoideum (Social amoeba).